Reading from the N-terminus, the 88-residue chain is Small ribosomal subunit protein bS20 (88 aa).

A disordered region spans residues 1 to 27 (MANSKSAKKRALQSEKRRQHNASRRSM).

This sequence belongs to the bacterial ribosomal protein bS20 family.

Functionally, binds directly to 16S ribosomal RNA. The chain is Small ribosomal subunit protein bS20 from Shewanella frigidimarina (strain NCIMB 400).